A 380-amino-acid polypeptide reads, in one-letter code: Cytochrome b (380 aa).

The next 4 membrane-spanning stretches (helical) occupy residues 34-54 (FGSL…LLAM), 78-99 (WLIR…YFHI), 114-134 (WNTG…GYVL), and 179-199 (FFAL…IHLT). The heme b site is built by His84 and His98. Positions 183 and 197 each coordinate heme b. His202 is a binding site for a ubiquinone. A run of 4 helical transmembrane segments spans residues 227-247 (LKDI…ALFS), 289-309 (LGGV…PFLH), 321-341 (LSQL…WVGS), and 348-368 (FIII…VLFP).

Belongs to the cytochrome b family. In terms of assembly, the cytochrome bc1 complex contains 11 subunits: 3 respiratory subunits (MT-CYB, CYC1 and UQCRFS1), 2 core proteins (UQCRC1 and UQCRC2) and 6 low-molecular weight proteins (UQCRH/QCR6, UQCRB/QCR7, UQCRQ/QCR8, UQCR10/QCR9, UQCR11/QCR10 and a cleavage product of UQCRFS1). This cytochrome bc1 complex then forms a dimer. It depends on heme b as a cofactor.

The protein resides in the mitochondrion inner membrane. In terms of biological role, component of the ubiquinol-cytochrome c reductase complex (complex III or cytochrome b-c1 complex) that is part of the mitochondrial respiratory chain. The b-c1 complex mediates electron transfer from ubiquinol to cytochrome c. Contributes to the generation of a proton gradient across the mitochondrial membrane that is then used for ATP synthesis. In Halobaena caerulea (Blue petrel), this protein is Cytochrome b (MT-CYB).